We begin with the raw amino-acid sequence, 113 residues long: MNYTLSKRLCLTAMLTLAAVVYTTSAFAETSKLVIESGDSAQSRQEAAMEKEQWNDTRSLRQKVNTRAEKEWDKADAAFDNRDKCEQSANINAYWEPNTLRCLDRRTGRVITP.

The N-terminal stretch at 1–28 is a signal peptide; sequence MNYTLSKRLCLTAMLTLAAVVYTTSAFA.

It belongs to the UPF0482 family.

The chain is UPF0482 protein YnfB from Salmonella arizonae (strain ATCC BAA-731 / CDC346-86 / RSK2980).